The following is a 303-amino-acid chain: Cytidine deaminase (303 aa).

CMP/dCMP-type deaminase domains follow at residues Thr-57–Asp-172 and Ile-196–Ser-303. Residue Asn-98–Glu-100 participates in substrate binding. His-111 is a Zn(2+) binding site. Glu-113 serves as the catalytic Proton donor. The Zn(2+) site is built by Cys-138 and Cys-141.

This sequence belongs to the cytidine and deoxycytidylate deaminase family. In terms of assembly, homodimer. Requires Zn(2+) as cofactor.

It catalyses the reaction cytidine + H2O + H(+) = uridine + NH4(+). The enzyme catalyses 2'-deoxycytidine + H2O + H(+) = 2'-deoxyuridine + NH4(+). Its function is as follows. This enzyme scavenges exogenous and endogenous cytidine and 2'-deoxycytidine for UMP synthesis. This Histophilus somni (strain 2336) (Haemophilus somnus) protein is Cytidine deaminase.